A 146-amino-acid polypeptide reads, in one-letter code: 3-hydroxyacyl-[acyl-carrier-protein] dehydratase FabZ (146 aa).

Residue H46 is part of the active site.

This sequence belongs to the thioester dehydratase family. FabZ subfamily.

The protein resides in the cytoplasm. The catalysed reaction is a (3R)-hydroxyacyl-[ACP] = a (2E)-enoyl-[ACP] + H2O. Its function is as follows. Involved in unsaturated fatty acids biosynthesis. Catalyzes the dehydration of short chain beta-hydroxyacyl-ACPs and long chain saturated and unsaturated beta-hydroxyacyl-ACPs. In Acinetobacter baumannii (strain ATCC 17978 / DSM 105126 / CIP 53.77 / LMG 1025 / NCDC KC755 / 5377), this protein is 3-hydroxyacyl-[acyl-carrier-protein] dehydratase FabZ.